We begin with the raw amino-acid sequence, 371 residues long: D-alanine--D-alanine ligase (371 aa).

An ATP-grasp domain is found at 154-361; sequence KKLLVAEGLP…YPTLLAAMVD (208 aa). ATP is bound at residue 182–237; sequence RERLGLPVFVKPARGGSSIGVSRVSDWAELPAAIEAARRHDPKVIVEAGIAGRELE. Mg(2+)-binding residues include Asp-316, Glu-328, and Asn-330.

Belongs to the D-alanine--D-alanine ligase family. Mg(2+) serves as cofactor. Mn(2+) is required as a cofactor.

It localises to the cytoplasm. The enzyme catalyses 2 D-alanine + ATP = D-alanyl-D-alanine + ADP + phosphate + H(+). It participates in cell wall biogenesis; peptidoglycan biosynthesis. Its function is as follows. Cell wall formation. The protein is D-alanine--D-alanine ligase of Mycobacterium sp. (strain JLS).